A 195-amino-acid polypeptide reads, in one-letter code: MTIGVLGLQGDFREHLWALQKLQVETIVVKTVEDLRKTKGLIIPGGESTTIGKLARLTGIADELEKLVDQDFPIYGTCAGMILLAKQIVNYPYQYSFGFMDIVVERNAYGRQVESFEVNLDIPSTGGLFKAIFIRAPKIVEWGEGVEVLARYGDSPVLVRQGNLLASSFHPELGQDLRIHKYFLEMAGVKHAGIC.

46 to 48 (GES) serves as a coordination point for L-glutamine. Cysteine 78 serves as the catalytic Nucleophile. L-glutamine is bound by residues arginine 106 and 134-135 (IR). Residues histidine 170 and glutamate 172 each act as charge relay system in the active site.

This sequence belongs to the glutaminase PdxT/SNO family. In terms of assembly, in the presence of PdxS, forms a dodecamer of heterodimers. Only shows activity in the heterodimer.

It catalyses the reaction aldehydo-D-ribose 5-phosphate + D-glyceraldehyde 3-phosphate + L-glutamine = pyridoxal 5'-phosphate + L-glutamate + phosphate + 3 H2O + H(+). The enzyme catalyses L-glutamine + H2O = L-glutamate + NH4(+). It functions in the pathway cofactor biosynthesis; pyridoxal 5'-phosphate biosynthesis. Functionally, catalyzes the hydrolysis of glutamine to glutamate and ammonia as part of the biosynthesis of pyridoxal 5'-phosphate. The resulting ammonia molecule is channeled to the active site of PdxS. This Pseudothermotoga lettingae (strain ATCC BAA-301 / DSM 14385 / NBRC 107922 / TMO) (Thermotoga lettingae) protein is Pyridoxal 5'-phosphate synthase subunit PdxT.